The primary structure comprises 1141 residues: Envelopment polyprotein (1141 aa).

The N-terminal stretch at 1–19 (MFCLCLSLLGLLLCWPAAT) is a signal peptide. Over 20–489 (RNLLELKVEC…CVPGLHGWAT (470 aa)) the chain is Lumenal. Cystine bridges form between cysteine 29/cysteine 154, cysteine 63/cysteine 160, cysteine 112/cysteine 131, cysteine 136/cysteine 141, cysteine 178/cysteine 188, and cysteine 213/cysteine 252. The N-linked (GlcNAc...) asparagine; by host glycan is linked to asparagine 137. A glycan (N-linked (GlcNAc...) asparagine; by host) is linked at asparagine 352. 4 cysteine pairs are disulfide-bonded: cysteine 381-cysteine 440, cysteine 385-cysteine 394, cysteine 410-cysteine 429, and cysteine 457-cysteine 480. N-linked (GlcNAc...) asparagine; by host glycosylation occurs at asparagine 404. The helical transmembrane segment at 490–510 (ISLLITFCFGWLAIPLLSMII) threads the bilayer. The Cytoplasmic segment spans residues 511 to 632 (IRFLLIFTYL…LSMFRYKSKC (122 aa)). The tract at residues 521 to 538 (CSKYSTDSKFKLIIEKVK) is binding to the ribonucleoprotein. CCHC-type zinc fingers lie at residues 550-570 (CEVC…KKSC) and 575-596 (CPYC…FKVC). Binding to the ribonucleoprotein stretches follow at residues 593–610 (FKVC…KKSL), 597–608 (KLTTRFQENLKK), and 616–630 (KRGL…RYKS). Residues 612–653 (TYEPKRGLYRTLSMFRYKSKCYVGLVWCILLTMELIVWAASA) are inhibition of interferon induction. Residues 616-639 (KRGLYRTLSMFRYKSKCYVGLVWC) enclose the ITAM domain. Tyrosine 620 and tyrosine 633 each carry phosphotyrosine. Positions 620 to 623 (YRTL) match the YxxL motif. A helical membrane pass occupies residues 633–653 (YVGLVWCILLTMELIVWAASA). The Lumenal portion of the chain corresponds to 654–1109 (ETINLEPGWT…EWLLGILSGN (456 aa)). Cystine bridges form between cysteine 740-cysteine 775, cysteine 744-cysteine 782, cysteine 756-cysteine 889, cysteine 770-cysteine 900, cysteine 785-cysteine 908, cysteine 811-cysteine 820, cysteine 828-cysteine 837, and cysteine 868-cysteine 872. A fusion loop region spans residues 762 to 782 (FEFETGWGCNPPDCPGVGTGC). A glycan (N-linked (GlcNAc...) asparagine; by host) is linked at asparagine 932. 5 disulfide bridges follow: cysteine 974-cysteine 1004, cysteine 997-cysteine 1049, cysteine 1014-cysteine 1019, cysteine 1050-cysteine 1055, and cysteine 1089-cysteine 1093. Residues 1110–1130 (WMVVAVLIALFIFSLLLFSLC) traverse the membrane as a helical segment. The interval 1126–1141 (LFSLCCPRRQNYKKNK) is binding to the ribonucleoprotein. Residues 1131–1141 (CPRRQNYKKNK) lie on the Cytoplasmic side of the membrane.

This sequence belongs to the hantavirus envelope glycoprotein family. In terms of assembly, homodimer. Homotetramer; forms heterotetrameric Gn-Gc spikes in the pre-fusion conformation. Interacts (via C-terminus) with the nucleoprotein. Interacts with host TUFM; this interaction contributes to the virus-induced degradation of mitochondria by autophagy, which leads to degradation of host MAVS and inhibition of type I interferon (IFN) responses. Interacts with host MAP1LC3B; this interaction contributes to the virus-induced degradation of mitochondria by autophagy, which leads to degradation of host MAVS and inhibition of type I interferon (IFN) responses. Homodimer. Homotetramer; forms heterotetrameric Gn-Gc spikes in the pre-fusion conformation. Homotrimer; forms homotrimer in the post-fusion conformation at acidic pH. Interacts (via C-terminus) with the nucleoprotein. In terms of processing, envelope polyprotein precursor is quickly cleaved in vivo just after synthesis, presumably by host signal peptidase.

The protein resides in the virion membrane. It is found in the host cell surface. The protein localises to the host Golgi apparatus membrane. It localises to the host endoplasmic reticulum membrane. Its subcellular location is the host mitochondrion. In terms of biological role, forms homotetramers with glycoprotein C at the surface of the virion. Attaches the virion to host cell receptors including integrin alpha5/ITGB1. This attachment induces virion internalization predominantly through clathrin-dependent endocytosis. Mediates the assembly and budding of infectious virus particles through its interaction with the nucleocapsid protein and the viral genome. May dysregulate normal immune and endothelial cell responses through an ITAM motif. Translocates to mitochondria, binds to host TUFM and recruits MAP1LC3B. These interactions induce mitochondrial autophagy and therefore destruction of host MAVS leading to inhibition of type I interferon (IFN) responses. Concomitant breakdown of glycoprotein N is apparently prevented by the nucleoprotein that may inhibit Gn-stimulated autophagosome-lysosome fusion. Interacts with the viral genomic RNA. Inhibits the host RIG-I/TBK1 pathway by disrupting the formation of TBK1-TRAF3 complexes and downstream signaling responses required for IFN-beta transcription. Forms homotetramers with glycoprotein N at the surface of the virion. Attaches the virion to host cell receptors including integrin ITGAV/ITGB3. This attachment induces virion internalization predominantly through clathrin-dependent endocytosis. Class II fusion protein that promotes fusion of viral membrane with host endosomal membrane after endocytosis of the virion. The sequence is that of Envelopment polyprotein (GP) from Tula orthohantavirus (TULV).